The chain runs to 520 residues: TnpB-like protein L770 (520 aa).

The interval 23 to 44 (KTKKKVFVKKKPPDKKPLKKPV) is disordered. Residues cysteine 474, cysteine 477, cysteine 491, and cysteine 494 each contribute to the Zn(2+) site.

The protein in the central section; belongs to the transposase 2 family. In the C-terminal section; belongs to the transposase 35 family.

The chain is TnpB-like protein L770 from Acanthamoeba polyphaga mimivirus (APMV).